Consider the following 333-residue polypeptide: NADH-quinone oxidoreductase subunit H (333 aa).

The next 8 membrane-spanning stretches (helical) occupy residues 15–35, 88–108, 117–137, 159–179, 191–211, 250–270, 273–293, and 313–333; these read LVIF…FVTY, FILA…TLPF, IGVG…GVVA, ISYE…TGSL, VWYI…AVAE, LFAM…PVMF, FIPG…VLIW, and VLFP…ELFF.

The protein belongs to the complex I subunit 1 family. As to quaternary structure, NDH-1 is composed of 14 different subunits. Subunits NuoA, H, J, K, L, M, N constitute the membrane sector of the complex.

The protein localises to the cell membrane. It carries out the reaction a quinone + NADH + 5 H(+)(in) = a quinol + NAD(+) + 4 H(+)(out). In terms of biological role, NDH-1 shuttles electrons from NADH, via FMN and iron-sulfur (Fe-S) centers, to quinones in the respiratory chain. The immediate electron acceptor for the enzyme in this species is believed to be ubiquinone. Couples the redox reaction to proton translocation (for every two electrons transferred, four hydrogen ions are translocated across the cytoplasmic membrane), and thus conserves the redox energy in a proton gradient. This subunit may bind ubiquinone. This chain is NADH-quinone oxidoreductase subunit H, found in Geobacillus sp. (strain WCH70).